A 498-amino-acid chain; its full sequence is Probable lysophospholipase BODYGUARD 3 (498 aa).

The N-terminal stretch at 1-55 is a signal peptide; it reads MAVMKIKGAATVAGTWLNEAVSFVVFCILDIVDSFLCLLYKAADYLFEAEWKPCY. Residue Cys-56 is the site of N-palmitoyl cysteine attachment. Residues 220–326 enclose the AB hydrolase-1 domain; that stretch reads VLFIHGFISS…LTLLAPPYYP (107 aa). His-224 is an active-site residue. The active-site Nucleophile is the Ser-297. Residues Asp-446 and His-474 each act as charge relay system in the active site.

It localises to the cell membrane. The protein localises to the secreted. It is found in the cell wall. Functionally, involved in cuticle development and morphogenesis. This Arabidopsis thaliana (Mouse-ear cress) protein is Probable lysophospholipase BODYGUARD 3.